The sequence spans 219 residues: Small ribosomal subunit protein uS3c (219 aa).

The region spanning 47–118 is the KH type-2 domain; that stretch reads IKKNIRISSG…KINIAITRIT (72 aa).

The protein belongs to the universal ribosomal protein uS3 family. In terms of assembly, part of the 30S ribosomal subunit.

Its subcellular location is the plastid. It localises to the chloroplast. The sequence is that of Small ribosomal subunit protein uS3c (rps3) from Citrus sinensis (Sweet orange).